The following is a 433-amino-acid chain: Urokinase-type plasminogen activator (433 aa).

The first 20 residues, 1–20 (MRALLAHLLLCVLVVSASKG), serve as a signal peptide directing secretion. Residues 26–62 (VPSDCGCLNGGTCMSNKYFSSIHWCNCPKKFGGQHCE) enclose the EGF-like domain. 6 cysteine pairs are disulfide-bonded: C30-C38, C32-C50, C52-C61, C69-C150, C90-C132, and C121-C145. The segment at 33 to 56 (LNGGTCMSNKYFSSIHWCNCPKKF) is binds urokinase plasminogen activator surface receptor. Positions 69–150 (CYEGNGHFYR…RVQECMVHNC (82 aa)) constitute a Kringle domain. Residues 151 to 177 (ADGKKPSSPPEELQFQCGQRTLRPRFK) form a connecting peptide region. S157 carries the post-translational modification Phosphoserine. 6 disulfide bridges follow: C167–C298, C208–C224, C216–C287, C315–C384, C347–C363, and C374–C402. The Peptidase S1 domain occupies 178–426 (IVGGEFTTIE…FLPWIHSHTR (249 aa)). Catalysis depends on charge relay system residues H223 and D274. Residue N324 is glycosylated (N-linked (GlcNAc...) asparagine). S325 bears the Phosphoserine mark. S378 acts as the Charge relay system in catalysis.

It belongs to the peptidase S1 family. As to quaternary structure, found in high and low molecular mass forms. Each consists of two chains, A and B. The high molecular mass form contains a long chain A which is cleaved to yield a short chain A. Forms heterodimer with SERPINA5. Binds LRP1B; binding is followed by internalization and degradation. Interacts with MRC2. Interacts with PLAUR. In complex with SERPINE1, interacts with PLAUR/uPAR. Interacts with SORL1 and LRP1, either alone or in complex with SERPINE1; these interactions are abolished in the presence of LRPAP1/RAP. The ternary complex composed of PLAUR-PLAU-PAI1 also interacts with SORLA. In terms of processing, phosphorylation of Ser-157 and Ser-325 abolishes proadhesive ability but does not interfere with receptor binding. Post-translationally, produced as an inactive single-chain protein (pro-uPA or sc-uPA), is processed into the active disulfide-linked two-chain form of PLAU/uPA by a proteolytic event mediated, at least, by TMPRSS4.

It localises to the secreted. It catalyses the reaction Specific cleavage of Arg-|-Val bond in plasminogen to form plasmin.. Its activity is regulated as follows. Inhibited by SERPINA5. Inhibited by SERPINE1. Functionally, specifically cleaves the zymogen plasminogen to form the active enzyme plasmin. This chain is Urokinase-type plasminogen activator (PLAU), found in Papio cynocephalus (Yellow baboon).